The sequence spans 399 residues: Nicotinate phosphoribosyltransferase (399 aa).

His217 is subject to Phosphohistidine; by autocatalysis.

Belongs to the NAPRTase family. Transiently phosphorylated on a His residue during the reaction cycle. Phosphorylation strongly increases the affinity for substrates and increases the rate of nicotinate D-ribonucleotide production. Dephosphorylation regenerates the low-affinity form of the enzyme, leading to product release.

It catalyses the reaction nicotinate + 5-phospho-alpha-D-ribose 1-diphosphate + ATP + H2O = nicotinate beta-D-ribonucleotide + ADP + phosphate + diphosphate. Its pathway is cofactor biosynthesis; NAD(+) biosynthesis; nicotinate D-ribonucleotide from nicotinate: step 1/1. Functionally, catalyzes the synthesis of beta-nicotinate D-ribonucleotide from nicotinate and 5-phospho-D-ribose 1-phosphate at the expense of ATP. In Burkholderia orbicola (strain MC0-3), this protein is Nicotinate phosphoribosyltransferase.